The primary structure comprises 455 residues: Chromosomal replication initiator protein DnaA (455 aa).

A domain I, interacts with DnaA modulators region spans residues 1-73 (MTISPQYIWN…LEEVETIVGY (73 aa)). Positions 73-114 (YPIAVKLTTSQEQNLRIVDKNKDNLSSTKLQNKRQQESPKLN) are domain II. The segment at 115–331 (QLNPRYNFSR…GALIRAVTYI (217 aa)) is domain III, AAA+ region. ATP is bound by residues Gly159, Gly161, Lys162, and Thr163. The domain IV, binds dsDNA stretch occupies residues 332 to 455 (SISGLSMTVE…RINIASRNQN (124 aa)).

Belongs to the DnaA family. In terms of assembly, oligomerizes as a right-handed, spiral filament on DNA at oriC.

Its subcellular location is the cytoplasm. Its function is as follows. Plays an essential role in the initiation and regulation of chromosomal replication. ATP-DnaA binds to the origin of replication (oriC) to initiate formation of the DNA replication initiation complex once per cell cycle. Binds the DnaA box (a 9 base pair repeat at the origin) and separates the double-stranded (ds)DNA. Forms a right-handed helical filament on oriC DNA; dsDNA binds to the exterior of the filament while single-stranded (ss)DNA is stabiized in the filament's interior. The ATP-DnaA-oriC complex binds and stabilizes one strand of the AT-rich DNA unwinding element (DUE), permitting loading of DNA polymerase. After initiation quickly degrades to an ADP-DnaA complex that is not apt for DNA replication. Binds acidic phospholipids. This Crocosphaera subtropica (strain ATCC 51142 / BH68) (Cyanothece sp. (strain ATCC 51142)) protein is Chromosomal replication initiator protein DnaA.